The primary structure comprises 932 residues: DNA mismatch repair protein MutS (932 aa).

Residue 615–622 (GPNMAGKS) coordinates ATP.

Belongs to the DNA mismatch repair MutS family.

This protein is involved in the repair of mismatches in DNA. It is possible that it carries out the mismatch recognition step. This protein has a weak ATPase activity. The protein is DNA mismatch repair protein MutS of Clostridium botulinum (strain Loch Maree / Type A3).